The primary structure comprises 165 residues: Putative ankyrin repeat domain-containing protein 20A5 (165 aa).

ANK repeat units follow at residues 66 to 95, 99 to 128, and 132 to 161; these read QHRT…QIDI, ENRT…NPNL, and YGNT…NIEA.

The protein is Putative ankyrin repeat domain-containing protein 20A5 (ANKRD20A5P) of Homo sapiens (Human).